Here is a 207-residue protein sequence, read N- to C-terminus: LexA repressor (207 aa).

The H-T-H motif DNA-binding region spans 28-48 (VREIGEAVGLASSSTVHGHLS). Catalysis depends on for autocatalytic cleavage activity residues serine 130 and lysine 168.

This sequence belongs to the peptidase S24 family. Homodimer.

It catalyses the reaction Hydrolysis of Ala-|-Gly bond in repressor LexA.. Functionally, represses a number of genes involved in the response to DNA damage (SOS response), including recA and lexA. In the presence of single-stranded DNA, RecA interacts with LexA causing an autocatalytic cleavage which disrupts the DNA-binding part of LexA, leading to derepression of the SOS regulon and eventually DNA repair. In Staphylococcus carnosus (strain TM300), this protein is LexA repressor.